The chain runs to 467 residues: Ribosomal RNA small subunit methyltransferase F (467 aa).

Residues 119-125 (ASAPGSK), E143, D170, and D188 each bind S-adenosyl-L-methionine. The active-site Nucleophile is the C241.

Belongs to the class I-like SAM-binding methyltransferase superfamily. RsmB/NOP family.

The protein resides in the cytoplasm. It carries out the reaction cytidine(1407) in 16S rRNA + S-adenosyl-L-methionine = 5-methylcytidine(1407) in 16S rRNA + S-adenosyl-L-homocysteine + H(+). Its function is as follows. Specifically methylates the cytosine at position 1407 (m5C1407) of 16S rRNA. In Shewanella amazonensis (strain ATCC BAA-1098 / SB2B), this protein is Ribosomal RNA small subunit methyltransferase F.